Consider the following 325-residue polypeptide: Probable siderophore-binding lipoprotein YfiY (325 aa).

The first 20 residues, 1-20, serve as a signal peptide directing secretion; that stretch reads MKKHISMLFVFLMAVMVLSA. Cys-21 is lipidated: N-palmitoyl cysteine. Residue Cys-21 is the site of S-diacylglycerol cysteine attachment. The Fe/B12 periplasmic-binding domain occupies 56–325; that stretch reads RIVVLTNEGT…DIETYFLKTK (270 aa). Ser-290 carries the phosphoserine modification. Thr-302 carries the phosphothreonine modification.

This sequence belongs to the bacterial solute-binding protein 8 family. In terms of assembly, the complex is composed of one ATP-binding protein (YusV), two transmembrane proteins (YfiZ and YfhA) and a solute-binding protein (YfiY). Interacts with FloT.

It localises to the cell membrane. The protein localises to the cytoplasm. The protein resides in the membrane raft. Its function is as follows. Part of the ABC transporter complex YfiYZ/YfhA/YusV involved in import of the iron-hydroxamate siderophores schizokinen, arthrobactin and corprogen. Binds the siderophores and delivers them to the surface of YfiZ/YfhA. This Bacillus subtilis (strain 168) protein is Probable siderophore-binding lipoprotein YfiY (yfiY).